A 132-amino-acid chain; its full sequence is Agouti-signaling protein (132 aa).

The N-terminal stretch at 1-22 (MDVTRLLLATLLVFLCFFTACS) is a signal peptide. An N-linked (GlcNAc...) asparagine glycan is attached at N39. The interval 61 to 87 (QISRKEAEKKRSSKKEASMKKVARPRT) is disordered. A compositionally biased stretch (basic and acidic residues) spans 63–79 (SRKEAEKKRSSKKEASM). Disulfide bonds link C93-C108, C100-C114, C107-C125, C111-C132, and C116-C123. Residues 93–132 (CVATRDSCKPPAPACCDPCASCQCRFFRSACSCRVLSLNC) enclose the Agouti domain.

The protein localises to the secreted. In terms of biological role, involved in the regulation of melanogenesis. The binding of ASP to MC1R precludes alpha-MSH initiated signaling and thus blocks production of cAMP, leading to a down-regulation of eumelanogenesis (brown/black pigment) and thus increasing synthesis of pheomelanin (yellow/red pigment). The sequence is that of Agouti-signaling protein (ASIP) from Macaca nigrescens (Gorontalo macaque).